A 219-amino-acid chain; its full sequence is Ribose-5-phosphate isomerase A (219 aa).

Substrate contacts are provided by residues 28–31 (TGST), 81–84 (DGAD), and 94–97 (KGGG). Catalysis depends on Glu103, which acts as the Proton acceptor. A substrate-binding site is contributed by Lys121.

The protein belongs to the ribose 5-phosphate isomerase family. In terms of assembly, homodimer.

The enzyme catalyses aldehydo-D-ribose 5-phosphate = D-ribulose 5-phosphate. It participates in carbohydrate degradation; pentose phosphate pathway; D-ribose 5-phosphate from D-ribulose 5-phosphate (non-oxidative stage): step 1/1. Its function is as follows. Catalyzes the reversible conversion of ribose-5-phosphate to ribulose 5-phosphate. The chain is Ribose-5-phosphate isomerase A from Escherichia fergusonii (strain ATCC 35469 / DSM 13698 / CCUG 18766 / IAM 14443 / JCM 21226 / LMG 7866 / NBRC 102419 / NCTC 12128 / CDC 0568-73).